A 1171-amino-acid polypeptide reads, in one-letter code: DNA-directed RNA polymerase subunit beta (1171 aa).

The protein belongs to the RNA polymerase beta chain family. In terms of assembly, the RNAP catalytic core consists of 2 alpha, 1 beta, 1 beta' and 1 omega subunit. When a sigma factor is associated with the core the holoenzyme is formed, which can initiate transcription.

It carries out the reaction RNA(n) + a ribonucleoside 5'-triphosphate = RNA(n+1) + diphosphate. Its function is as follows. DNA-dependent RNA polymerase catalyzes the transcription of DNA into RNA using the four ribonucleoside triphosphates as substrates. The protein is DNA-directed RNA polymerase subunit beta of Corynebacterium efficiens (strain DSM 44549 / YS-314 / AJ 12310 / JCM 11189 / NBRC 100395).